The primary structure comprises 200 residues: Recombination protein RecR (200 aa).

A C4-type zinc finger spans residues 59–74 (CEKCNTFTEAQVCEVC). The Toprim domain occupies 82 to 177 (ALLCVVETPA…AVTRLARGVP (96 aa)).

It belongs to the RecR family.

Its function is as follows. May play a role in DNA repair. It seems to be involved in an RecBC-independent recombinational process of DNA repair. It may act with RecF and RecO. The polypeptide is Recombination protein RecR (Burkholderia pseudomallei (strain 1106a)).